The primary structure comprises 66 residues: Large ribosomal subunit protein bL35 (66 aa).

Composition is skewed to basic residues over residues 1 to 15 (MSKL…KRFK) and 22 to 43 (ILHK…RKRR). The segment at 1 to 43 (MSKLKTRSSAAKRFKVTATGKILHKKAGKRHNLSKKSESRKRR) is disordered.

The protein belongs to the bacterial ribosomal protein bL35 family.

The sequence is that of Large ribosomal subunit protein bL35 from Dictyoglomus turgidum (strain DSM 6724 / Z-1310).